The chain runs to 87 residues: U3-theraphotoxin-Hhn1m (87 aa).

The N-terminal stretch at 1 to 24 is a signal peptide; sequence MVNMKASMFLTFAGLVLLFVVCYA. Residues 25–52 constitute a propeptide that is removed on maturation; that stretch reads SESEEKEFPKEMLSSIFAVDNDFKQEER. 3 disulfides stabilise this stretch: Cys-54-Cys-67, Cys-61-Cys-72, and Cys-66-Cys-79.

This sequence belongs to the neurotoxin 10 (Hwtx-1) family. 51 (Hntx-8) subfamily. Hntx-8 sub-subfamily. In terms of tissue distribution, expressed by the venom gland.

The protein localises to the secreted. Functionally, ion channel inhibitor. This Cyriopagopus hainanus (Chinese bird spider) protein is U3-theraphotoxin-Hhn1m.